A 309-amino-acid chain; its full sequence is Olfactory receptor 7A10 (309 aa).

At 1–25 (MKSWNNTIILEFLLLGISEEPELQA) the chain is on the extracellular side. N-linked (GlcNAc...) asparagine glycosylation is present at N5. The chain crosses the membrane as a helical span at residues 26–46 (FLFGLFLSMYLVTVLGNLLII). Residues 47–54 (LATISDSH) are Cytoplasmic-facing. A helical transmembrane segment spans residues 55–75 (LHTPMYFFLSNLSFVDICFVS). At 76-99 (TTVPKMLVNIQTHNKVITYAGCIT) the chain is on the extracellular side. A disulfide bond links C97 and C189. Residues 100–120 (QMCFFLLFVGLDNFLLTVMAY) form a helical membrane-spanning segment. At 121 to 139 (DRFVAICHPLHYMVIMNPQ) the chain is on the cytoplasmic side. The chain crosses the membrane as a helical span at residues 140 to 160 (LCGLLVLASWIMSVLNSMLQS). Residues 161-197 (LMVLPLPFCTHMEIPHFFCEINQVVHLACSDTFLNDI) lie on the Extracellular side of the membrane. Residues 198–217 (VMYFAVALLGGGPLTGILYS) form a helical membrane-spanning segment. Residues 218–237 (YSKIVSSIRAISSAQGKYKA) are Cytoplasmic-facing. Residues 238–258 (FSTCASHLSVVSLFYGTCLGV) traverse the membrane as a helical segment. At 259 to 271 (YLSSAATHNSHTG) the chain is on the extracellular side. A helical membrane pass occupies residues 272–292 (AAASVMYTVVTPMLNPFIYSL). Over 293 to 309 (RNKHIKGAMKTFFRGKQ) the chain is Cytoplasmic.

Belongs to the G-protein coupled receptor 1 family.

It localises to the cell membrane. In terms of biological role, odorant receptor. In Homo sapiens (Human), this protein is Olfactory receptor 7A10 (OR7A10).